The following is a 236-amino-acid chain: Uridylate kinase (236 aa).

K10–G13 lines the ATP pocket. Position 52 (G52) interacts with UMP. Residues G53 and R57 each coordinate ATP. Residues D72 and T133–T140 contribute to the UMP site. The ATP site is built by T160, Y166, and D169.

It belongs to the UMP kinase family. As to quaternary structure, homohexamer.

The protein localises to the cytoplasm. The enzyme catalyses UMP + ATP = UDP + ADP. It participates in pyrimidine metabolism; CTP biosynthesis via de novo pathway; UDP from UMP (UMPK route): step 1/1. With respect to regulation, inhibited by UTP. In terms of biological role, catalyzes the reversible phosphorylation of UMP to UDP. This Phocaeicola vulgatus (strain ATCC 8482 / DSM 1447 / JCM 5826 / CCUG 4940 / NBRC 14291 / NCTC 11154) (Bacteroides vulgatus) protein is Uridylate kinase.